The following is a 614-amino-acid chain: MDQARISFFPDGLRVMIIDDDAKAVRRATATLSQLQYAVVATHSTASAGLRALSGDNVVEIQAILCDVHKVVSSGFDFRRVVESELRIPVIYLLSKMEEEDMVAGEDAEFLNHLLLTATYIVRKPLNPTVMARLWRVVAWRMYCLEERIQANVAANAGAGGEDDDDDDDVVIVEEPQVHFKVVRRTSGGSRKRQLTINVVDDGNRGSGSGGGGGGGADANPTRILQHITSNLQEFRTKHQKKDMAIERPLISSDSMFLKAILPTLKISPCNPLILTGGIGSSSVAAEAFAGGSSSAAPLQIPVFQQQSTGNGNTVISFSNNASPMAMRAPTDNTMISFNNVSAAPVANAVISFSNISRSAAMQAPAARGQHLSGDVQQLDFPQQKLYFGPFSYQGPPPPSMHNHINLLPPTSSPVTCSMDKGKVPIIELPYGMPVDDFLVGQTAYGGAGLSIGATDAAATAYPYTDAPSNNVATGCLMVPRMGPAFSITEPTVVAQGEGIGTGVDAGTSEKNAIVEAPNNPAPLMVLDQVAADAAMDVEEDIMFSLESLLGPDYDLLPMEDVSAPDTAAAGDAAGGSLDGEEGGMDIGWDLDLDDILVENVNDFAFLDNLAGSE.

A Response regulatory domain is found at 14–139; sequence RVMIIDDDAK…VMARLWRVVA (126 aa). At D67 the chain carries 4-aspartylphosphate. Residues 193-220 form a disordered region; the sequence is RQLTINVVDDGNRGSGSGGGGGGGADAN. Over residues 205-217 the composition is skewed to gly residues; it reads RGSGSGGGGGGGA.

It belongs to the ARR family. Type-B subfamily. In terms of processing, two-component system major event consists of a His-to-Asp phosphorelay between a sensor histidine kinase (HK) and a response regulator (RR). In plants, the His-to-Asp phosphorelay involves an additional intermediate named Histidine-containing phosphotransfer protein (HPt). This multistep phosphorelay consists of a His-Asp-His-Asp sequential transfer of a phosphate group between first a His and an Asp of the HK protein, followed by the transfer to a conserved His of the HPt protein and finally the transfer to an Asp in the receiver domain of the RR protein.

Functionally, functions as a response regulator involved in His-to-Asp phosphorelay signal transduction system. Phosphorylation of the Asp residue in the receiver domain activates the ability of the protein to promote the transcription of target genes. May directly activate some type-A response regulators in response to cytokinins. The protein is Two-component response regulator ORR33 of Oryza sativa subsp. indica (Rice).